The primary structure comprises 180 residues: NADH-quinone oxidoreductase subunit I (180 aa).

2 4Fe-4S ferredoxin-type domains span residues 48–80 (IVLT…LQKS) and 90–119 (EFFR…LTPD). Cys60, Cys63, Cys66, Cys70, Cys99, Cys102, Cys105, and Cys109 together coordinate [4Fe-4S] cluster. Residues 161 to 174 (KPKGDAENEAKPID) are compositionally biased toward basic and acidic residues. The interval 161-180 (KPKGDAENEAKPIDVKSLLP) is disordered.

This sequence belongs to the complex I 23 kDa subunit family. In terms of assembly, NDH-1 is composed of 13 different subunits. Subunits NuoA, H, J, K, L, M, N constitute the membrane sector of the complex. [4Fe-4S] cluster serves as cofactor.

The protein localises to the cell inner membrane. The enzyme catalyses a quinone + NADH + 5 H(+)(in) = a quinol + NAD(+) + 4 H(+)(out). Functionally, NDH-1 shuttles electrons from NADH, via FMN and iron-sulfur (Fe-S) centers, to quinones in the respiratory chain. The immediate electron acceptor for the enzyme in this species is believed to be ubiquinone. Couples the redox reaction to proton translocation (for every two electrons transferred, four hydrogen ions are translocated across the cytoplasmic membrane), and thus conserves the redox energy in a proton gradient. In Shewanella oneidensis (strain ATCC 700550 / JCM 31522 / CIP 106686 / LMG 19005 / NCIMB 14063 / MR-1), this protein is NADH-quinone oxidoreductase subunit I.